Reading from the N-terminus, the 541-residue chain is Neutral amino acid transporter B(0) (541 aa).

Met-1 is subject to N-acetylmethionine. Positions 1–10 are enriched in basic and acidic residues; it reads MVADPPKGDP. The interval 1–32 is disordered; the sequence is MVADPPKGDPKGLAAVEPTANGAPAQDPLEDS. Topologically, residues 1 to 52 are cytoplasmic; sequence MVADPPKGDPKGLAAVEPTANGAPAQDPLEDSGAAVGRCCSSRDQVRRCLRA. A helical membrane pass occupies residues 53-82; that stretch reads NLLVLLTVVAVVAGVALGLAVSGAGGALAL. The Extracellular portion of the chain corresponds to 83-95; sequence GPARLIAFAFPGE. A helical membrane pass occupies residues 96–117; sequence LLLRLLKMIILPLVVCSLVGGA. Over 118-131 the chain is Cytoplasmic; it reads ASLDPSALGRLGAW. The helical transmembrane segment at 132 to 154 threads the bilayer; the sequence is ALLFFLVTTLLASALGVGLALAL. At 155-225 the chain is on the extracellular side; sequence QPGAAFAAMN…GTLVKVPVAH (71 aa). Asn-164 and Asn-215 each carry an N-linked (GlcNAc...) asparagine glycan. The helical transmembrane segment at 226–249 threads the bilayer; that stretch reads EEEGMNILGLVVFAIVFGVALRKL. The Cytoplasmic segment spans residues 250–258; it reads GPEGEPLIR. A helical transmembrane segment spans residues 259-286; it reads FFNSFNDATMVLVSWIMWYAPVGILFLV. Residues 287–307 are Extracellular-facing; that stretch reads ASKIVEMDDVGVLFASLGKYI. Residues 308 to 329 traverse the membrane as a helical segment; sequence LCCLLGHAIHGLLVLPLIYFLF. The Cytoplasmic portion of the chain corresponds to 330 to 334; the sequence is TRKNP. The segment at residues 335–365 is an intramembrane region (discontinuously helical); sequence YRFLWGILTPLAMAFGTSSSSATLPLMMKCV. Residues 366–374 are Cytoplasmic-facing; it reads EERNGVAKH. A helical transmembrane segment spans residues 375–401; sequence ISRFVLPIGATVNMDGAALFQCVAAVF. Na(+)-binding residues include Gly-383, Thr-385, and Asn-387. The Extracellular portion of the chain corresponds to 402–414; sequence IAQLNRQSLDFVK. Residues 415–448 constitute an intramembrane region (discontinuously helical); that stretch reads IITILVTATASSVGAAGIPAGGVLTLAIILEAVS. Over 449–461 the chain is Extracellular; sequence LPVSEISLILAVD. A helical transmembrane segment spans residues 462 to 483; sequence WLVDRSCTIINVEGDAFGAGLL. Residues Asn-472 and Asp-476 each coordinate Na(+). Residues 484 to 541 lie on the Cytoplasmic side of the membrane; the sequence is QHYVDRTEQRGSEPELTQVKSEVPLGSLPAPNEEGNPLLRHSPGAAGDAGACEKESVM. Residues 493 to 541 form a disordered region; that stretch reads RGSEPELTQVKSEVPLGSLPAPNEEGNPLLRHSPGAAGDAGACEKESVM. Residues Ser-495, Ser-504, and Ser-539 each carry the phosphoserine modification.

This sequence belongs to the dicarboxylate/amino acid:cation symporter (DAACS) (TC 2.A.23) family. SLC1A5 subfamily. In terms of assembly, homotrimer.

The protein localises to the cell membrane. It is found in the melanosome. It catalyses the reaction L-glutamine(out) + L-serine(in) + Na(+)(out) = L-glutamine(in) + L-serine(out) + Na(+)(in). The catalysed reaction is L-glutamine(in) + L-serine(out) + Na(+)(out) = L-glutamine(out) + L-serine(in) + Na(+)(in). It carries out the reaction L-threonine(in) + L-glutamine(out) + Na(+)(out) = L-threonine(out) + L-glutamine(in) + Na(+)(in). The enzyme catalyses L-threonine(out) + L-glutamine(in) + Na(+)(out) = L-threonine(in) + L-glutamine(out) + Na(+)(in). It catalyses the reaction L-asparagine(in) + L-glutamine(out) + Na(+)(out) = L-asparagine(out) + L-glutamine(in) + Na(+)(in). The catalysed reaction is L-asparagine(out) + L-glutamine(in) + Na(+)(out) = L-asparagine(in) + L-glutamine(out) + Na(+)(in). It carries out the reaction L-glutamine(in) + L-alanine(out) + Na(+)(out) = L-glutamine(out) + L-alanine(in) + Na(+)(in). The enzyme catalyses L-valine(out) + L-glutamine(in) + Na(+)(out) = L-valine(in) + L-glutamine(out) + Na(+)(in). It catalyses the reaction L-glutamine(in) + L-methionine(out) + Na(+)(out) = L-glutamine(out) + L-methionine(in) + Na(+)(in). The catalysed reaction is L-glutamine(in) + L-glutamate(out) + Na(+)(out) + H(+)(out) = L-glutamine(out) + L-glutamate(in) + Na(+)(in) + H(+)(in). It carries out the reaction D-serine(in) + L-glutamine(out) + Na(+)(out) = D-serine(out) + L-glutamine(in) + Na(+)(in). The enzyme catalyses D-serine(in) + L-alanine(out) + Na(+)(out) = D-serine(out) + L-alanine(in) + Na(+)(in). It catalyses the reaction nitrate(in) = nitrate(out). The catalysed reaction is iodide(out) = iodide(in). It carries out the reaction thiocyanate(in) = thiocyanate(out). Functionally, sodium-coupled antiporter of neutral amino acids. In a tri-substrate transport cycle, exchanges neutral amino acids between the extracellular and intracellular compartments, coupled to the inward cotransport of at least one sodium ion. The preferred substrate is the essential amino acid L-glutamine, a precursor for biosynthesis of proteins, nucleotides and amine sugars as well as an alternative fuel for mitochondrial oxidative phosphorylation. Exchanges L-glutamine with other neutral amino acids such as L-serine, L-threonine and L-asparagine in a bidirectional way. Provides L-glutamine to proliferating stem and activated cells driving the metabolic switch toward cell differentiation. The transport cycle is usually pH-independent, with the exception of L-glutamate. Transports extracellular L-glutamate coupled to the cotransport of one proton and one sodium ion in exchange for intracellular L-glutamine counter-ion. May provide for L-glutamate uptake in glial cells regulating glutamine/glutamate cycle in the nervous system. Can transport D-amino acids. Mediates D-serine release from the retinal glia potentially affecting NMDA receptor function in retinal neurons. Displays sodium- and amino acid-dependent but uncoupled channel-like anion conductance with a preference SCN(-) &gt;&gt; NO3(-) &gt; I(-) &gt; Cl(-). Through binding of the fusogenic protein syncytin-1/ERVW-1 may mediate trophoblasts syncytialization, the spontaneous fusion of their plasma membranes, an essential process in placental development. This is Neutral amino acid transporter B(0) (SLC1A5) from Oryctolagus cuniculus (Rabbit).